The sequence spans 157 residues: Cyclic pyranopterin monophosphate synthase (157 aa).

Residues 74-76 (MCH) and 112-113 (ME) contribute to the substrate site. Asp-127 is a catalytic residue.

Belongs to the MoaC family. As to quaternary structure, homohexamer; trimer of dimers.

It carries out the reaction (8S)-3',8-cyclo-7,8-dihydroguanosine 5'-triphosphate = cyclic pyranopterin phosphate + diphosphate. The protein operates within cofactor biosynthesis; molybdopterin biosynthesis. Catalyzes the conversion of (8S)-3',8-cyclo-7,8-dihydroguanosine 5'-triphosphate to cyclic pyranopterin monophosphate (cPMP). This is Cyclic pyranopterin monophosphate synthase from Sulfurovum sp. (strain NBC37-1).